The chain runs to 120 residues: Large ribosomal subunit protein uL18 (120 aa).

Belongs to the universal ribosomal protein uL18 family. In terms of assembly, part of the 50S ribosomal subunit; part of the 5S rRNA/L5/L18/L25 subcomplex. Contacts the 5S and 23S rRNAs.

In terms of biological role, this is one of the proteins that bind and probably mediate the attachment of the 5S RNA into the large ribosomal subunit, where it forms part of the central protuberance. The polypeptide is Large ribosomal subunit protein uL18 (Macrococcus caseolyticus (strain JCSC5402) (Macrococcoides caseolyticum)).